Here is an 819-residue protein sequence, read N- to C-terminus: Zinc finger protein 658B (819 aa).

Residues 141-166 (YLSDEHGKCRKSFYWKAHLIQHERPH) form a C2H2-type 1; degenerate zinc finger. 14 consecutive C2H2-type zinc fingers follow at residues 200–222 (YECN…LRIH), 278–300 (YECI…QRIH), 306–328 (YECV…QRVH), 334–356 (YECN…QRIH), 362–384 (YECS…HRIH), 390–412 (YECN…QRIH), 418–440 (YECN…QRIH), 446–468 (YECS…QRIH), 474–496 (YKCN…QNIH), 502–524 (YECS…RRIH), 530–552 (YECS…ERIH), 558–580 (YECN…QRIH), 586–608 (YECN…QRIH), and 614–636 (YECN…HRIH). Residues 642–664 (YECNDCGKTFSKTSHLRAHLRTR) form a C2H2-type 16; degenerate zinc finger. 5 consecutive C2H2-type zinc fingers follow at residues 670–692 (YECS…QRVH), 698–720 (YECN…QRIH), 726–748 (YECN…QRIH), 754–776 (YECN…QRIH), and 782–805 (YECD…TRMH).

Belongs to the krueppel C2H2-type zinc-finger protein family.

The protein resides in the nucleus. Functionally, may be involved in transcriptional regulation. In Homo sapiens (Human), this protein is Zinc finger protein 658B (ZNF658B).